The primary structure comprises 187 residues: Ribosome maturation factor RimM (187 aa).

The 93-residue stretch at 91–183 folds into the PRC barrel domain; it reads DDGFYDHELE…ILVLTPPEGL (93 aa).

It belongs to the RimM family. As to quaternary structure, binds ribosomal protein uS19.

It is found in the cytoplasm. Functionally, an accessory protein needed during the final step in the assembly of 30S ribosomal subunit, possibly for assembly of the head region. Essential for efficient processing of 16S rRNA. May be needed both before and after RbfA during the maturation of 16S rRNA. It has affinity for free ribosomal 30S subunits but not for 70S ribosomes. The polypeptide is Ribosome maturation factor RimM (Corynebacterium jeikeium (strain K411)).